Here is a 577-residue protein sequence, read N- to C-terminus: 9-cis-epoxycarotenoid dioxygenase NCED6, chloroplastic (577 aa).

A disordered region spans residues 1–25; that stretch reads MQHSLRSDLLPTKTSPRSHLLPQPK. Histidine 276, histidine 325, histidine 390, and histidine 563 together coordinate Fe cation.

The protein belongs to the carotenoid oxygenase family. The cofactor is Fe(2+). In terms of tissue distribution, expressed before fertilization in male and female gametophytes, and then immediately after pollination, restricted to seed endosperm.

Its subcellular location is the plastid. It is found in the chloroplast stroma. It catalyses the reaction a 9-cis-epoxycarotenoid + O2 = a 12'-apo-carotenal + 2-cis,4-trans-xanthoxin. The enzyme catalyses 9-cis-violaxanthin + O2 = (3S,5R,6S)-5,6-epoxy-3-hydroxy-5,6-dihydro-12'-apo-beta-caroten-12'-al + 2-cis,4-trans-xanthoxin. It carries out the reaction 9'-cis-neoxanthin + O2 = (3S,5R,6R)-3,5-dihydroxy-6,7-didehydro-5,6-dihydro-12'-apo-beta-caroten-12'-al + 2-cis,4-trans-xanthoxin. Has a 11,12(11',12') 9-cis epoxycarotenoid cleavage activity. Catalyzes the first step of abscisic-acid biosynthesis from carotenoids. Contributes probably to abscisic acid synthesis for the induction of seed dormancy. This Arabidopsis thaliana (Mouse-ear cress) protein is 9-cis-epoxycarotenoid dioxygenase NCED6, chloroplastic (NCED6).